A 95-amino-acid chain; its full sequence is MKINREQVEHVARLARLALSEDELASLTDDMDAILGYVEKLNELDTDHIIPTAHAVPVENAFREDCAGSSIGTDKALQNAPEASDNCFVVPKVIE.

Belongs to the GatC family. As to quaternary structure, heterotrimer of A, B and C subunits.

It carries out the reaction L-glutamyl-tRNA(Gln) + L-glutamine + ATP + H2O = L-glutaminyl-tRNA(Gln) + L-glutamate + ADP + phosphate + H(+). The catalysed reaction is L-aspartyl-tRNA(Asn) + L-glutamine + ATP + H2O = L-asparaginyl-tRNA(Asn) + L-glutamate + ADP + phosphate + 2 H(+). In terms of biological role, allows the formation of correctly charged Asn-tRNA(Asn) or Gln-tRNA(Gln) through the transamidation of misacylated Asp-tRNA(Asn) or Glu-tRNA(Gln) in organisms which lack either or both of asparaginyl-tRNA or glutaminyl-tRNA synthetases. The reaction takes place in the presence of glutamine and ATP through an activated phospho-Asp-tRNA(Asn) or phospho-Glu-tRNA(Gln). The chain is Aspartyl/glutamyl-tRNA(Asn/Gln) amidotransferase subunit C from Syntrophotalea carbinolica (strain DSM 2380 / NBRC 103641 / GraBd1) (Pelobacter carbinolicus).